The chain runs to 230 residues: Thymine/uracil-DNA glycosylase (230 aa).

[4Fe-4S] cluster is bound by residues Cys-204, Cys-211, Cys-214, and Cys-221.

It belongs to the Nth/MutY family. Requires [4Fe-4S] cluster as cofactor.

It catalyses the reaction Hydrolyzes mismatched double-stranded DNA and polynucleotides, releasing free thymine.. Functionally, DNA glycosylase that excises thymine from T/G mismatches and uracil from U/G mismatches. Can also process T/GO and U/GO, but not A/G, T/C and U/C. Has weak AP lyase activity. This Pyrobaculum aerophilum (strain ATCC 51768 / DSM 7523 / JCM 9630 / CIP 104966 / NBRC 100827 / IM2) protein is Thymine/uracil-DNA glycosylase.